The following is a 642-amino-acid chain: Threonine--tRNA ligase (642 aa).

Residues 1–61 form the TGS domain; sequence MPVITLPDGS…ETDAELSIIT (61 aa). The catalytic stretch occupies residues 243 to 534; it reads DHRKIGKQLD…LIEEYAGRFP (292 aa). The Zn(2+) site is built by Cys334, His385, and His511.

It belongs to the class-II aminoacyl-tRNA synthetase family. In terms of assembly, homodimer. Zn(2+) is required as a cofactor.

Its subcellular location is the cytoplasm. The enzyme catalyses tRNA(Thr) + L-threonine + ATP = L-threonyl-tRNA(Thr) + AMP + diphosphate + H(+). Its function is as follows. Catalyzes the attachment of threonine to tRNA(Thr) in a two-step reaction: L-threonine is first activated by ATP to form Thr-AMP and then transferred to the acceptor end of tRNA(Thr). Also edits incorrectly charged L-seryl-tRNA(Thr). This chain is Threonine--tRNA ligase, found in Shewanella sp. (strain MR-7).